The sequence spans 562 residues: NAD-dependent malic enzyme (562 aa).

Residue tyrosine 101 is the Proton donor of the active site. NAD(+) is bound at residue arginine 154. Catalysis depends on lysine 172, which acts as the Proton acceptor. The a divalent metal cation site is built by glutamate 243, aspartate 244, and aspartate 267. Residues aspartate 267 and asparagine 415 each coordinate NAD(+).

It belongs to the malic enzymes family. As to quaternary structure, homotetramer. The cofactor is Mg(2+). Requires Mn(2+) as cofactor.

The enzyme catalyses (S)-malate + NAD(+) = pyruvate + CO2 + NADH. It catalyses the reaction oxaloacetate + H(+) = pyruvate + CO2. The polypeptide is NAD-dependent malic enzyme (Aliivibrio fischeri (strain MJ11) (Vibrio fischeri)).